The chain runs to 257 residues: 4-hydroxy-tetrahydrodipicolinate reductase (257 aa).

NAD(+)-binding positions include 8–13 (GSTGRV), 90–92 (ATT), and 114–117 (ATNM). Histidine 146 serves as the catalytic Proton donor/acceptor. Histidine 147 is a (S)-2,3,4,5-tetrahydrodipicolinate binding site. Lysine 150 functions as the Proton donor in the catalytic mechanism. A (S)-2,3,4,5-tetrahydrodipicolinate-binding site is contributed by 156–157 (GT).

Belongs to the DapB family.

The protein resides in the cytoplasm. The catalysed reaction is (S)-2,3,4,5-tetrahydrodipicolinate + NAD(+) + H2O = (2S,4S)-4-hydroxy-2,3,4,5-tetrahydrodipicolinate + NADH + H(+). It catalyses the reaction (S)-2,3,4,5-tetrahydrodipicolinate + NADP(+) + H2O = (2S,4S)-4-hydroxy-2,3,4,5-tetrahydrodipicolinate + NADPH + H(+). The protein operates within amino-acid biosynthesis; L-lysine biosynthesis via DAP pathway; (S)-tetrahydrodipicolinate from L-aspartate: step 4/4. Functionally, catalyzes the conversion of 4-hydroxy-tetrahydrodipicolinate (HTPA) to tetrahydrodipicolinate. The polypeptide is 4-hydroxy-tetrahydrodipicolinate reductase (Aliarcobacter butzleri (strain RM4018) (Arcobacter butzleri)).